The sequence spans 930 residues: Translation initiation factor IF-2 (930 aa).

Positions 50–67 (FKPAAAPKVEAKPAAPKV) are enriched in low complexity. Disordered stretches follow at residues 50–196 (FKPA…RIDF) and 260–346 (EVVP…HELP). Basic and acidic residues-rich tracts occupy residues 68-90 (SAEK…EAKP) and 110-125 (FKAE…AERR). Residues 129-141 (KGNNRDQQQNGNR) show a composition bias toward low complexity. Basic and acidic residues-rich tracts occupy residues 157–172 (RDNR…EQGQ) and 262–295 (VPEK…DGPR). The segment covering 309–318 (NQKNSNWNNN) has biased composition (low complexity). Residues 337–346 (VTERKFHELP) show a composition bias toward basic and acidic residues. The tr-type G domain occupies 432 to 599 (ERPPVVTIMG…TVLLVAEIQE (168 aa)). Residues 441–448 (GHVDHGKT) are G1. 441–448 (GHVDHGKT) contributes to the GTP binding site. The interval 466–470 (GITQH) is G2. A G3 region spans residues 487 to 490 (DTPG). Residues 487–491 (DTPGH) and 541–544 (NKID) contribute to the GTP site. Residues 541–544 (NKID) are G4. The G5 stretch occupies residues 577–579 (SAK).

Belongs to the TRAFAC class translation factor GTPase superfamily. Classic translation factor GTPase family. IF-2 subfamily.

The protein localises to the cytoplasm. Its function is as follows. One of the essential components for the initiation of protein synthesis. Protects formylmethionyl-tRNA from spontaneous hydrolysis and promotes its binding to the 30S ribosomal subunits. Also involved in the hydrolysis of GTP during the formation of the 70S ribosomal complex. This chain is Translation initiation factor IF-2, found in Streptococcus pneumoniae serotype 19F (strain G54).